Here is a 500-residue protein sequence, read N- to C-terminus: Cytochrome P450 monooxygenase acrD (500 aa).

A helical membrane pass occupies residues 13 to 32 (PYLSGTNLVWTLLLVGYIIP). 2 N-linked (GlcNAc...) asparagine glycosylation sites follow: asparagine 210 and asparagine 414. Residue cysteine 447 participates in heme binding.

The protein belongs to the cytochrome P450 family. Heme serves as cofactor.

It localises to the membrane. Its pathway is secondary metabolite biosynthesis. Cytochrome P450 monooxygenase; part of the cluster that mediates the biosynthesis of acurin A, a highly reduced polyketide coupled to a serine via a peptide bond. The activities of the highly reducing polyketide synthase acrA and the nonribosomal peptide synthetase acrB are collectively responsible for the synthesis of the acurin A core structure with a heptaketide backbone produced by acrA covalently fused to a L-serine by acrB. After the formation of the PK-NRP hybrid product, it is detached from acrB by reductive release to set up the formation of the lactam ring by aldol condensation. The hydrolyase acrC then catalyzes water loss to generate a double bond in the ring. This double bond is probably reduced, which is followed by three oxidations at C-22 to generate the carboxylic acid moiety, involving probably the FAD-binding monooxygenase acrE and the cytochrome P450 monooxygenases acrD and acrF. Finally, a last methylation step performed by the O-methyltransferase acrG leads to the production of acurin A. In Aspergillus aculeatus (strain ATCC 16872 / CBS 172.66 / WB 5094), this protein is Cytochrome P450 monooxygenase acrD.